The sequence spans 427 residues: Probable G-protein coupled receptor 150 (427 aa).

Over 1-3 (MED) the chain is Extracellular. Residues 4–24 (PFSLAILNPASNLSVPTQPSW) traverse the membrane as a helical segment. At 25 to 50 (SLNLTSEQGASVPGPHSPPRGPPSHR) the chain is on the cytoplasmic side. Residues 51 to 71 (IHLVFLGIILVAAVAGNTTVL) form a helical membrane-spanning segment. At 72-89 (CRLCGGSSGPWPGPKRRK) the chain is on the extracellular side. A helical transmembrane segment spans residues 90–110 (MDFLLVQLAAADLYASGGTAL). Residues 111 to 170 (SQLAWELLGDPRPALGDLACRLSHLLQASGRGASAHLVALIALERQLAVRIPQGPQLPAR) lie on the Cytoplasmic side of the membrane. A helical transmembrane segment spans residues 171-191 (ALAALSWLLALLLALPPTFVV). Topologically, residues 192–230 (RWDAPPSSTANAWPGKHCCRGIFAPLPRWHLQVYALYEA) are extracellular. A helical membrane pass occupies residues 231–251 (IVGFAAPVALLGFSCGHLLCV). At 252–286 (WWQRGSQAPVARMPWSPSMARASLPSALPQAKVQS) the chain is on the cytoplasmic side. Residues 287 to 307 (LKMSLALALLFVGCDLPYFAA) traverse the membrane as a helical segment. Residues 308 to 327 (RLAAAWSSKPAGDWERESLV) lie on the Extracellular side of the membrane. Residues 328–348 (AAMRVLEVANSAINPLIYLFF) form a helical membrane-spanning segment. The Cytoplasmic portion of the chain corresponds to 349 to 427 (QAGDCRLWRR…PPPCSCESAF (79 aa)). Residues 402–427 (EERNQGCLRPPPPRPRPPPCSCESAF) form a disordered region. Positions 410-421 (RPPPPRPRPPPC) are enriched in pro residues.

The protein belongs to the G-protein coupled receptor 1 family.

Its subcellular location is the cell membrane. Its function is as follows. Orphan receptor. The chain is Probable G-protein coupled receptor 150 (Gpr150) from Mus musculus (Mouse).